A 366-amino-acid chain; its full sequence is Anhydro-N-acetylmuramic acid kinase (366 aa).

10-17 serves as a coordination point for ATP; that stretch reads GTSMDGID.

Belongs to the anhydro-N-acetylmuramic acid kinase family.

The catalysed reaction is 1,6-anhydro-N-acetyl-beta-muramate + ATP + H2O = N-acetyl-D-muramate 6-phosphate + ADP + H(+). It functions in the pathway amino-sugar metabolism; 1,6-anhydro-N-acetylmuramate degradation. The protein operates within cell wall biogenesis; peptidoglycan recycling. Catalyzes the specific phosphorylation of 1,6-anhydro-N-acetylmuramic acid (anhMurNAc) with the simultaneous cleavage of the 1,6-anhydro ring, generating MurNAc-6-P. Is required for the utilization of anhMurNAc either imported from the medium or derived from its own cell wall murein, and thus plays a role in cell wall recycling. The chain is Anhydro-N-acetylmuramic acid kinase from Legionella pneumophila (strain Paris).